An 853-amino-acid chain; its full sequence is NADH-quinone oxidoreductase subunit G 2 (853 aa).

Residues 1 to 78 enclose the 2Fe-2S ferredoxin-type domain; the sequence is MIKVTIDEQS…GMVVRTNTPL (78 aa). [2Fe-2S] cluster is bound by residues Cys-34, Cys-45, Cys-48, and Cys-62. The region spanning 78-117 is the 4Fe-4S His(Cys)3-ligated-type domain; it reads LIEETRSSMLDMLLANHPLDCPICDKGGECELQDMVMAYG. [4Fe-4S] cluster contacts are provided by His-94, Cys-98, Cys-101, Cys-107, Cys-148, Cys-151, Cys-154, Cys-198, Cys-224, Cys-227, Cys-231, and Cys-259. 2 4Fe-4S ferredoxin-type domains span residues 139 to 170 and 179 to 209; these read PVIIMNVNRCIQCQRCVRMCEEVVGAVALGTV and TGFEGSLASCDQCGNCVEVCPVGALMSFPYR. In terms of domain architecture, 4Fe-4S Mo/W bis-MGD-type spans 217 to 273; sequence LAETDTICPHCGTGCQLTVGARKGEFMRVRSDWEHGVNRETLCVRGRFGLDFIESRD.

It belongs to the complex I 75 kDa subunit family. It depends on [2Fe-2S] cluster as a cofactor. [4Fe-4S] cluster serves as cofactor.

It carries out the reaction a quinone + NADH + 5 H(+)(in) = a quinol + NAD(+) + 4 H(+)(out). In terms of biological role, NDH-1 shuttles electrons from NADH, via FMN and iron-sulfur (Fe-S) centers, to quinones in the respiratory chain. The immediate electron acceptor for the enzyme in this species is believed to be ubiquinone. Couples the redox reaction to proton translocation (for every two electrons transferred, four hydrogen ions are translocated across the cytoplasmic membrane), and thus conserves the redox energy in a proton gradient. This Rhizobium meliloti (strain 1021) (Ensifer meliloti) protein is NADH-quinone oxidoreductase subunit G 2 (nuoG2).